The chain runs to 313 residues: Myeloma-overexpressed gene protein (313 aa).

The interval 107-129 (ERNKGDKGAQTGAGLSQEAEDVD) is disordered.

The polypeptide is Myeloma-overexpressed gene protein (MYEOV) (Homo sapiens (Human)).